The chain runs to 122 residues: MIQMQTILDVADNSGARRVMCIKVLGGSKRRYASVGDIIKVAVKDAVPRGRVKKGDVYNAVVVRTAKGVRRPDGALIKFDNNAAVLLNNKLEPLGTRIFGPVTRELRTERFMKIVSLAPEVL.

This sequence belongs to the universal ribosomal protein uL14 family. As to quaternary structure, part of the 50S ribosomal subunit. Forms a cluster with proteins L3 and L19. In the 70S ribosome, L14 and L19 interact and together make contacts with the 16S rRNA in bridges B5 and B8.

Binds to 23S rRNA. Forms part of two intersubunit bridges in the 70S ribosome. This chain is Large ribosomal subunit protein uL14, found in Neisseria gonorrhoeae (strain ATCC 700825 / FA 1090).